The chain runs to 340 residues: Anthranilate phosphoribosyltransferase (340 aa).

5-phospho-alpha-D-ribose 1-diphosphate-binding positions include glycine 80, 83–84, threonine 88, 90–93, 108–116, and serine 120; these read GD, NIST, and KHGNRAMSS. Residue glycine 80 participates in anthranilate binding. Residue serine 92 participates in Mg(2+) binding. Residue asparagine 111 participates in anthranilate binding. Arginine 166 is an anthranilate binding site. Residues aspartate 225 and glutamate 226 each coordinate Mg(2+).

This sequence belongs to the anthranilate phosphoribosyltransferase family. In terms of assembly, homodimer. The cofactor is Mg(2+).

The catalysed reaction is N-(5-phospho-beta-D-ribosyl)anthranilate + diphosphate = 5-phospho-alpha-D-ribose 1-diphosphate + anthranilate. It participates in amino-acid biosynthesis; L-tryptophan biosynthesis; L-tryptophan from chorismate: step 2/5. In terms of biological role, catalyzes the transfer of the phosphoribosyl group of 5-phosphorylribose-1-pyrophosphate (PRPP) to anthranilate to yield N-(5'-phosphoribosyl)-anthranilate (PRA). The protein is Anthranilate phosphoribosyltransferase of Chloroflexus aggregans (strain MD-66 / DSM 9485).